A 347-amino-acid polypeptide reads, in one-letter code: tRNA(Ile)-lysidine synthase (347 aa).

27 to 32 (SGGADS) provides a ligand contact to ATP. The interval 243-263 (AAPASPSHVEGEASAPHDAAH) is disordered.

This sequence belongs to the tRNA(Ile)-lysidine synthase family.

The protein resides in the cytoplasm. It carries out the reaction cytidine(34) in tRNA(Ile2) + L-lysine + ATP = lysidine(34) in tRNA(Ile2) + AMP + diphosphate + H(+). Functionally, ligates lysine onto the cytidine present at position 34 of the AUA codon-specific tRNA(Ile) that contains the anticodon CAU, in an ATP-dependent manner. Cytidine is converted to lysidine, thus changing the amino acid specificity of the tRNA from methionine to isoleucine. The chain is tRNA(Ile)-lysidine synthase from Nitratidesulfovibrio vulgaris (strain ATCC 29579 / DSM 644 / CCUG 34227 / NCIMB 8303 / VKM B-1760 / Hildenborough) (Desulfovibrio vulgaris).